The sequence spans 1512 residues: Non-structural polyprotein 1AB (1512 aa).

5 helical membrane passes run L190–A210, V295–I315, A323–F343, I360–V380, and A399–T419. Residues H524, D556, and S621 each act as charge relay system; for serine protease activity in the active site. Y753 carries the post-translational modification O-(5'-phospho-RNA)-tyrosine. The interval P940–A981 is disordered. Residues V941–V961 are compositionally biased toward low complexity. One can recognise a RdRp catalytic domain in the interval T1257 to D1390.

The protein belongs to the astroviridae polyprotein 1AB family. Monomer. Post-translationally, cleaved by the viral and host proteases. The protease is probably autocatalytically cleaved.

The protein localises to the host membrane. The catalysed reaction is RNA(n) + a ribonucleoside 5'-triphosphate = RNA(n+1) + diphosphate. Responsible for the cleavage of the polyprotein into functional products. Its function is as follows. Protein covalently attached to the 5' extremity of the genomic and subgenomic RNAs. It may serve as a primer for the replicase. This chain is Non-structural polyprotein 1AB (ORF1), found in Gallus gallus (Chicken).